Here is a 336-residue protein sequence, read N- to C-terminus: Pyridoxal 5'-phosphate synthase subunit PdxS (336 aa).

Asp33 provides a ligand contact to D-ribose 5-phosphate. Residue Lys90 is the Schiff-base intermediate with D-ribose 5-phosphate of the active site. Gly162 is a binding site for D-ribose 5-phosphate. Arg174 is a binding site for D-glyceraldehyde 3-phosphate. Residues Gly260 and 281–282 (GS) each bind D-ribose 5-phosphate.

Belongs to the PdxS/SNZ family. In terms of assembly, in the presence of PdxT, forms a dodecamer of heterodimers.

It catalyses the reaction aldehydo-D-ribose 5-phosphate + D-glyceraldehyde 3-phosphate + L-glutamine = pyridoxal 5'-phosphate + L-glutamate + phosphate + 3 H2O + H(+). Its pathway is cofactor biosynthesis; pyridoxal 5'-phosphate biosynthesis. In terms of biological role, catalyzes the formation of pyridoxal 5'-phosphate from ribose 5-phosphate (RBP), glyceraldehyde 3-phosphate (G3P) and ammonia. The ammonia is provided by the PdxT subunit. Can also use ribulose 5-phosphate and dihydroxyacetone phosphate as substrates, resulting from enzyme-catalyzed isomerization of RBP and G3P, respectively. The polypeptide is Pyridoxal 5'-phosphate synthase subunit PdxS (Picrophilus torridus (strain ATCC 700027 / DSM 9790 / JCM 10055 / NBRC 100828 / KAW 2/3)).